A 238-amino-acid polypeptide reads, in one-letter code: Fatty acid metabolism regulator protein (238 aa).

The region spanning 6–74 (QSPAGFAEEY…HGKPTKVNNF (69 aa)) is the HTH gntR-type domain. The H-T-H motif DNA-binding region spans 34-53 (ERELSELIGVTRTTLREVLQ).

Homodimer.

The protein localises to the cytoplasm. Functionally, multifunctional regulator of fatty acid metabolism. The protein is Fatty acid metabolism regulator protein of Erwinia tasmaniensis (strain DSM 17950 / CFBP 7177 / CIP 109463 / NCPPB 4357 / Et1/99).